Reading from the N-terminus, the 117-residue chain is Hydrogenase maturation factor HypA (117 aa).

Residue His2 coordinates Ni(2+). Zn(2+)-binding residues include Cys73, Cys76, Cys89, and Cys92.

Belongs to the HypA/HybF family.

Involved in the maturation of [NiFe] hydrogenases. Required for nickel insertion into the metal center of the hydrogenase. In Shewanella baltica (strain OS195), this protein is Hydrogenase maturation factor HypA.